A 116-amino-acid polypeptide reads, in one-letter code: Spermadhesin Z13 (116 aa).

2 cysteine pairs are disulfide-bonded: Cys14/Cys35 and Cys58/Cys79. Residues 14-115 (CGDLYGEEYG…PDFFLIFRRV (102 aa)) form the CUB domain.

It belongs to the spermadhesin family. As to quaternary structure, homodimer; disulfide-linked. As to expression, seminal plasma.

The protein localises to the secreted. May be involved in the fertilization process. In Bos taurus (Bovine), this protein is Spermadhesin Z13.